The chain runs to 147 residues: TRAF-interacting protein with FHA domain-containing protein B (147 aa).

Residues 36–108 (LLVGRGQNTH…LGTINRISFS (73 aa)) form the FHA domain.

Interacts with TIFA. As to expression, expressed at high levels in spleen and at moderate levels in lung, thymus, and small intestine.

In terms of biological role, inhibits TIFA-mediated TRAF6 activation possibly by inducing a conformational change in TIFA. This chain is TRAF-interacting protein with FHA domain-containing protein B, found in Mus musculus (Mouse).